Here is a 1407-residue protein sequence, read N- to C-terminus: DNA-directed RNA polymerase subunit beta' (1407 aa).

Residues Cys-70, Cys-72, Cys-85, and Cys-88 each coordinate Zn(2+). Residues Asp-460, Asp-462, and Asp-464 each contribute to the Mg(2+) site. Residues Cys-814, Cys-888, Cys-895, and Cys-898 each contribute to the Zn(2+) site.

The protein belongs to the RNA polymerase beta' chain family. The RNAP catalytic core consists of 2 alpha, 1 beta, 1 beta' and 1 omega subunit. When a sigma factor is associated with the core the holoenzyme is formed, which can initiate transcription. Mg(2+) is required as a cofactor. Zn(2+) serves as cofactor.

It carries out the reaction RNA(n) + a ribonucleoside 5'-triphosphate = RNA(n+1) + diphosphate. Functionally, DNA-dependent RNA polymerase catalyzes the transcription of DNA into RNA using the four ribonucleoside triphosphates as substrates. This is DNA-directed RNA polymerase subunit beta' from Cellvibrio japonicus (strain Ueda107) (Pseudomonas fluorescens subsp. cellulosa).